The sequence spans 556 residues: Small ribosomal subunit protein uS3m (556 aa).

Belongs to the universal ribosomal protein uS3 family. In terms of assembly, component of the mitochondrial ribosome small subunit.

It is found in the mitochondrion. This chain is Small ribosomal subunit protein uS3m (RPS3), found in Arabidopsis thaliana (Mouse-ear cress).